A 365-amino-acid polypeptide reads, in one-letter code: Metallophosphoesterase 1 homolog (365 aa).

Residues P10–F30 form a helical membrane-spanning segment. Positions 54, 96, 132, 208, 262, and 264 each coordinate a divalent metal cation. The helical transmembrane segment at I319–L339 threads the bilayer.

It belongs to the metallophosphoesterase superfamily. MPPE1 family. Requires Mn(2+) as cofactor.

Its subcellular location is the endoplasmic reticulum-Golgi intermediate compartment membrane. The protein resides in the golgi apparatus. It is found in the cis-Golgi network membrane. Functionally, metallophosphoesterase required for transport of GPI-anchor proteins from the endoplasmic reticulum to the Golgi. Acts in lipid remodeling steps of GPI-anchor maturation by mediating the removal of a side-chain ethanolamine-phosphate (EtNP) from the second Man (Man2) of the GPI intermediate, an essential step for efficient transport of GPI-anchor proteins. This Caenorhabditis elegans protein is Metallophosphoesterase 1 homolog.